The following is a 479-amino-acid chain: FAD-dependent monooxygenase ausM (479 aa).

FAD-binding residues include E40, G54, and R113. Residue Y224 is part of the active site. N289 carries an N-linked (GlcNAc...) asparagine glycan. Residues D316 and A329 each contribute to the FAD site. Residues 449–469 (TLPWLVISLPVLASMLCYLVY) traverse the membrane as a helical segment.

This sequence belongs to the paxM FAD-dependent monooxygenase family. The cofactor is FAD.

Its subcellular location is the membrane. Its pathway is secondary metabolite biosynthesis; terpenoid biosynthesis. Functionally, FAD-dependent monooxygenase; part of the gene cluster B that mediates the biosynthesis of austinol and dehydroaustinol, two fungal meroterpenoids. The first step of the pathway is the synthesis of 3,5-dimethylorsellinic acid by the polyketide synthase ausA. 3,5-dimethylorsellinic acid is then prenylated by the polyprenyl transferase ausN. Further epoxidation by the FAD-dependent monooxygenase ausM and cyclization by the probable terpene cyclase ausL lead to the formation of protoaustinoid A. Protoaustinoid A is then oxidized to spiro-lactone preaustinoid A3 by the combined action of the FAD-binding monooxygenases ausB and ausC, and the dioxygenase ausE. Acid-catalyzed keto-rearrangement and ring contraction of the tetraketide portion of preaustinoid A3 by ausJ lead to the formation of preaustinoid A4. The aldo-keto reductase ausK, with the help of ausH, is involved in the next step by transforming preaustinoid A4 into isoaustinone which is in turn hydroxylated by the P450 monooxygenase ausI to form austinolide. Finally, the cytochrome P450 monooxygenase ausG modifies austinolide to austinol. Austinol can be further modified to dehydroaustinol which forms a diffusible complex with diorcinol that initiates conidiation. Due to genetic rearrangements of the clusters and the subsequent loss of some enzymes, the end products of the Emericella nidulans austinoid biosynthesis clusters are austinol and dehydroaustinol, even if additional enzymes, such as the O-acetyltransferase ausQ and the cytochrome P450 monooxygenase ausR are still functional. This is FAD-dependent monooxygenase ausM from Emericella nidulans (strain FGSC A4 / ATCC 38163 / CBS 112.46 / NRRL 194 / M139) (Aspergillus nidulans).